We begin with the raw amino-acid sequence, 115 residues long: Ribonuclease P protein component (115 aa).

Belongs to the RnpA family. As to quaternary structure, consists of a catalytic RNA component (M1 or rnpB) and a protein subunit.

It carries out the reaction Endonucleolytic cleavage of RNA, removing 5'-extranucleotides from tRNA precursor.. Functionally, RNaseP catalyzes the removal of the 5'-leader sequence from pre-tRNA to produce the mature 5'-terminus. It can also cleave other RNA substrates such as 4.5S RNA. The protein component plays an auxiliary but essential role in vivo by binding to the 5'-leader sequence and broadening the substrate specificity of the ribozyme. This Symbiobacterium thermophilum (strain DSM 24528 / JCM 14929 / IAM 14863 / T) protein is Ribonuclease P protein component.